The primary structure comprises 91 residues: MPNIKSAIKRTKTIEKRRAHRASQKSDLRTSIKNFEKAVAASDVALAKSTLLVAVKKLDKAASKGLIHKNAANRQKSRLMKKLNVLSAPVA.

A disordered region spans residues 1–28 (MPNIKSAIKRTKTIEKRRAHRASQKSDL). Basic residues predominate over residues 7 to 23 (AIKRTKTIEKRRAHRAS).

The protein belongs to the bacterial ribosomal protein bS20 family.

Its function is as follows. Binds directly to 16S ribosomal RNA. This chain is Small ribosomal subunit protein bS20, found in Brevibacillus brevis (strain 47 / JCM 6285 / NBRC 100599).